We begin with the raw amino-acid sequence, 272 residues long: 1,4-dihydroxy-2-naphthoyl-CoA synthase (272 aa).

Residues R33, 72–76, Y84, 116–120, T142, S148, Y245, and K260 each bind substrate; these read SGGDQ and YAIGG. 141–143 serves as a coordination point for hydrogencarbonate; it reads QTG.

It belongs to the enoyl-CoA hydratase/isomerase family. MenB subfamily. Requires hydrogencarbonate as cofactor.

The catalysed reaction is 2-succinylbenzoyl-CoA + H(+) = 1,4-dihydroxy-2-naphthoyl-CoA + H2O. It participates in quinol/quinone metabolism; 1,4-dihydroxy-2-naphthoate biosynthesis; 1,4-dihydroxy-2-naphthoate from chorismate: step 6/7. It functions in the pathway quinol/quinone metabolism; menaquinone biosynthesis. In terms of biological role, converts o-succinylbenzoyl-CoA (OSB-CoA) to 1,4-dihydroxy-2-naphthoyl-CoA (DHNA-CoA). This chain is 1,4-dihydroxy-2-naphthoyl-CoA synthase, found in Staphylococcus epidermidis (strain ATCC 35984 / DSM 28319 / BCRC 17069 / CCUG 31568 / BM 3577 / RP62A).